The sequence spans 126 residues: Aspartate 1-decarboxylase (126 aa).

Residue Ser-25 is the Schiff-base intermediate with substrate; via pyruvic acid of the active site. Pyruvic acid (Ser) is present on Ser-25. Thr-57 provides a ligand contact to substrate. Tyr-58 serves as the catalytic Proton donor. 72 to 74 (GAT) contributes to the substrate binding site.

The protein belongs to the PanD family. Heterooctamer of four alpha and four beta subunits. Pyruvate is required as a cofactor. Is synthesized initially as an inactive proenzyme, which is activated by self-cleavage at a specific serine bond to produce a beta-subunit with a hydroxyl group at its C-terminus and an alpha-subunit with a pyruvoyl group at its N-terminus.

The protein localises to the cytoplasm. It catalyses the reaction L-aspartate + H(+) = beta-alanine + CO2. It functions in the pathway cofactor biosynthesis; (R)-pantothenate biosynthesis; beta-alanine from L-aspartate: step 1/1. Catalyzes the pyruvoyl-dependent decarboxylation of aspartate to produce beta-alanine. This is Aspartate 1-decarboxylase from Campylobacter jejuni subsp. doylei (strain ATCC BAA-1458 / RM4099 / 269.97).